Consider the following 224-residue polypeptide: Beta-casein (224 aa).

The signal sequence occupies residues 1-15; sequence MKVLILACLVALALA. Ser30, Ser32, Ser33, and Ser34 each carry phosphoserine.

The protein belongs to the beta-casein family. As to expression, mammary gland specific. Secreted in milk.

The protein localises to the secreted. Important role in determination of the surface properties of the casein micelles. The chain is Beta-casein (CSN2) from Bubalus bubalis (Domestic water buffalo).